Reading from the N-terminus, the 246-residue chain is Auxin-responsive protein IAA25 (246 aa).

A disordered region spans residues 1–22 (MKSSSVAPRLKQERQDDCKFQE). Over residues 10–22 (LKQERQDDCKFQE) the composition is skewed to basic and acidic residues. Positions 28-32 (LELRL) match the EAR-like (transcriptional repression) motif. Residues 143 to 238 (TMFVKVNLEG…SVKRLYIAQD (96 aa)) form the PB1 domain.

Belongs to the Aux/IAA family. As to quaternary structure, homodimers and heterodimers. In terms of tissue distribution, highly expressed in flowers. Expressed in roots and seedlings.

The protein resides in the nucleus. Its function is as follows. Aux/IAA proteins are short-lived transcriptional factors that function as repressors of early auxin response genes at low auxin concentrations. The polypeptide is Auxin-responsive protein IAA25 (IAA25) (Oryza sativa subsp. japonica (Rice)).